The following is a 296-amino-acid chain: Nucleotide-binding protein ABC3036 (296 aa).

An ATP-binding site is contributed by 13-20 (GMSGAGKS). 64 to 67 (DLRG) provides a ligand contact to GTP.

This sequence belongs to the RapZ-like family.

Its function is as follows. Displays ATPase and GTPase activities. This is Nucleotide-binding protein ABC3036 from Shouchella clausii (strain KSM-K16) (Alkalihalobacillus clausii).